The chain runs to 276 residues: Expansin-like A3 (276 aa).

The N-terminal stretch at 1 to 28 (MAVLLSILSSSFLLLLAASSSSTPRASA) is a signal peptide. Positions 52–158 (GGGCGYGAMA…RRIPCDYKDK (107 aa)) constitute an Expansin-like EG45 domain. Asn115 and Asn159 each carry an N-linked (GlcNAc...) asparagine glycan. The Expansin-like CBD domain maps to 172-255 (NNLVIKFLYQ…NWQPGQVYDT (84 aa)).

It belongs to the expansin family. Expansin-like A subfamily.

The protein resides in the secreted. This is Expansin-like A3 (EXLA3) from Oryza sativa subsp. japonica (Rice).